Here is a 1513-residue protein sequence, read N- to C-terminus: Mucin-2 (1513 aa).

The signal sequence occupies residues Met-1–Gly-20. One can recognise a VWFD 1 domain in the interval His-32–Glu-204. 28 cysteine pairs are disulfide-bonded: Cys-34–Cys-166, Cys-56–Cys-203, Cys-64–Cys-163, Cys-215–Cys-252, Cys-222–Cys-247, Cys-234–Cys-272, Cys-254–Cys-260, Cys-262–Cys-288, Cys-292–Cys-326, Cys-309–Cys-348, Cys-328–Cys-342, Cys-350–Cys-372, Cys-367–Cys-384, Cys-370–Cys-379, Cys-388–Cys-525, Cys-410–Cys-560, Cys-432–Cys-440, Cys-571–Cys-616, Cys-585–Cys-611, Cys-598–Cys-636, Cys-618–Cys-624, Cys-626–Cys-651, Cys-658–Cys-695, Cys-671–Cys-685, Cys-675–Cys-715, Cys-697–Cys-709, Cys-717–Cys-739, and Cys-737–Cys-746. Asp-46 serves as a coordination point for Ca(2+). Cu(+) contacts are provided by Met-143 and Met-151. Cu(2+) is bound at residue Glu-153. An N-linked (GlcNAc...) asparagine glycan is attached at Asn-160. Residues Asp-168, Asn-170, and Glu-177 each contribute to the Ca(2+) site. Residues His-274 and His-321 each contribute to the Cu(2+) site. The TIL domain maps to Cys-292–Cys-348. A Cu(+)-binding site is contributed by Met-323. The region spanning Cys-350–Cys-410 is the VWFC domain. In terms of domain architecture, VWFD 2 spans Glu-386–His-561. Asp-400 contributes to the Ca(2+) binding site. An N-linked (GlcNAc...) asparagine glycan is attached at Asn-420. Positions 527, 529, 531, 534, and 535 each coordinate Ca(2+). Asn-667 is a glycosylation site (N-linked (GlcNAc...) asparagine). The N-linked (GlcNAc...) asparagine glycan is linked to Asn-767. Intrachain disulfides connect Cys-781–Cys-817, Cys-799–Cys-811, Cys-819–Cys-842, Cys-836–Cys-854, Cys-840–Cys-849, Cys-858–Cys-989, Cys-880–Cys-1024, Cys-889–Cys-986, Cys-906–Cys-913, Cys-1034–Cys-1077, Cys-1048–Cys-1072, Cys-1059–Cys-1099, Cys-1079–Cys-1087, Cys-1089–Cys-1114, Cys-1105–Cys-1134, Cys-1118–Cys-1160, Cys-1142–Cys-1184, Cys-1164–Cys-1178, Cys-1186–Cys-1210, Cys-1205–Cys-1235, and Cys-1208–Cys-1218. Asn-837 carries N-linked (GlcNAc...) asparagine glycosylation. Positions Ser-856–Pro-1025 constitute a VWFD 3 domain. Residue Asp-870 coordinates Ca(2+). A glycan (N-linked (GlcNAc...) asparagine) is linked at Asn-892. Ca(2+) contacts are provided by Asn-991, Asp-993, Asn-998, and Asp-999. Residues Asn-1136 and Asn-1151 are each glycosylated (N-linked (GlcNAc...) asparagine). N-linked (GlcNAc...) asparagine glycans are attached at residues Asn-1212, Asn-1227, and Asn-1243. Thr-1264, Thr-1267, Thr-1268, and Thr-1280 each carry an O-linked (GalNAc) threonine glycan. The O-linked (GalNAc) serine glycan is linked to Ser-1286. An O-linked (GalNAc) threonine glycan is attached at Thr-1290. 6 residues coordinate Ca(2+): Asn-1303, His-1306, Ser-1309, Gly-1313, Asp-1314, and Glu-1316. Residue Asn-1350 is glycosylated (N-linked (GlcNAc...) asparagine). Residues Asp-1373 and Tyr-1374 each coordinate Ca(2+). 11 consecutive repeat copies span residues Ser-1392 to Ser-1407, Ser-1408 to Thr-1423, Ser-1424 to Val-1434, Ser-1435 to Thr-1445, Ser-1446 to Thr-1456, Ser-1457 to Pro-1467, Ser-1468 to Pro-1478, Ser-1479 to Pro-1489, Ser-1490 to Thr-1500, Ser-1501 to Thr-1511, and Ser-1512 to Pro-1513. The approximate repeats stretch occupies residues Ser-1392 to Pro-1513. The disordered stretch occupies residues Ser-1392 to Pro-1513.

Homomultimer; disulfide-linked. The N- and C-terminus mediate their assembly into higher order structures to form filaments. The CTCK domains of two polypeptides associate in the endoplasmic reticulum to generate intermolecularly disulfide-bonded dimers. These dimers progress to the Golgi apparatus, which is a more acidic environment than the endoplasmic reticulum. Under acidic conditions, the N-termini form non-covalent intermolecular interactions that juxtapose assemblies of the third VWD domain (VWD3) from different CTCK-linked dimers. The VWD3 assemblies then become disulfide bonded to one another to produce long, disulfide-linked polymers that remain highly compact until secretion. Interacts with FCGBP. Interacts with AGR2; disulfide-linked. In terms of processing, O-glycosylated. O-glycosylation is required for mucin assembly. Goblet cells synthesize two forms of mucin that differ in branched chain O-glycosylation and the site of production in the colon. May undergo proteolytic cleavage in the outer mucus layer of the colon, contributing to the expanded volume and loose nature of this layer which allows for bacterial colonization in contrast to the inner mucus layer which is dense and devoid of bacteria. Post-translationally, at low pH of 6 and under, undergoes autocatalytic cleavage in vitro in the N-terminal region of the fourth VWD domain. It is likely that this also occurs in vivo and is triggered by the low pH of the late secretory pathway. In terms of tissue distribution, expressed in intestine and airway.

The protein resides in the secreted. In terms of biological role, coats the epithelia of the intestines and other mucus membrane-containing organs to provide a protective, lubricating barrier against particles and infectious agents at mucosal surfaces. Major constituent of the colon mucus, which is mainly formed by large polymeric networks of MUC2 secreted by goblet cells that cover the exposed surfaces of intestine. MUC2 networks form hydrogels that guard the underlying epithelium from pathogens and other hazardous matter entering from the outside world, while permitting nutrient absorption and gas exchange. Acts as a divalent copper chaperone that protects intestinal cells from copper toxicity and facilitates nutritional copper unptake into cells. Binds both Cu(2+) and its reduced form, Cu(1+), at two juxtaposed binding sites: Cu(2+), once reduced to Cu(1+) by vitamin C (ascorbate) or other dietary antioxidants, transits to the other binding site. MUC2-bound Cu(1+) is protected from oxidation in aerobic environments, and can be released for nutritional delivery to cells. Mucin gels store antimicrobial molecules that participate in innate immunity. Mucin glycoproteins also house and feed the microbiome, lubricate tissue surfaces, and may facilitate the removal of contaminants and waste products from the body. Goblet cells synthesize two forms of MUC2 mucin that differ in branched chain O-glycosylation and the site of production in the colon: a (1) 'thick' mucus that wraps the microbiota to form fecal pellets is produced in the proximal, ascending colon. 'Thick' mucus transits along the descending colon and is lubricated by a (2) 'thin' MUC2 mucus produced in the distal colon which adheres to the 'thick' mucus. The chain is Mucin-2 from Rattus norvegicus (Rat).